The following is a 776-amino-acid chain: Ankyrin repeat and EF-hand domain-containing protein 1 (776 aa).

ANK repeat units follow at residues 47 to 76, 184 to 213, 217 to 246, and 250 to 279; these read NGLS…HPDV, TGRT…EVNA, DRHH…DVGL, and NGNT…DLKW. An EF-hand domain is found at 335–369; it reads EREAFLREAFAVLDRGDGSISKNDFVMVLEERQDY. 4 ANK repeats span residues 524–553, 557–586, 590–619, and 623–652; these read YYKT…NVNA, FLWT…LIDA, NNST…KFQL, and KGHS…NLPK.

In Homo sapiens (Human), this protein is Ankyrin repeat and EF-hand domain-containing protein 1 (ANKEF1).